The sequence spans 193 residues: Potassium-transporting ATPase KdpC subunit (193 aa).

Residues 8–28 (VVLLIFLTLITGVAYPLLATG) form a helical membrane-spanning segment.

This sequence belongs to the KdpC family. In terms of assembly, the system is composed of three essential subunits: KdpA, KdpB and KdpC.

It localises to the cell inner membrane. Its function is as follows. Part of the high-affinity ATP-driven potassium transport (or Kdp) system, which catalyzes the hydrolysis of ATP coupled with the electrogenic transport of potassium into the cytoplasm. This subunit acts as a catalytic chaperone that increases the ATP-binding affinity of the ATP-hydrolyzing subunit KdpB by the formation of a transient KdpB/KdpC/ATP ternary complex. In Photorhabdus laumondii subsp. laumondii (strain DSM 15139 / CIP 105565 / TT01) (Photorhabdus luminescens subsp. laumondii), this protein is Potassium-transporting ATPase KdpC subunit.